The sequence spans 481 residues: 3-isopropylmalate dehydratase large subunit (481 aa).

The [4Fe-4S] cluster site is built by C357, C417, and C420.

Belongs to the aconitase/IPM isomerase family. LeuC type 1 subfamily. Heterodimer of LeuC and LeuD. The cofactor is [4Fe-4S] cluster.

The catalysed reaction is (2R,3S)-3-isopropylmalate = (2S)-2-isopropylmalate. It participates in amino-acid biosynthesis; L-leucine biosynthesis; L-leucine from 3-methyl-2-oxobutanoate: step 2/4. In terms of biological role, catalyzes the isomerization between 2-isopropylmalate and 3-isopropylmalate, via the formation of 2-isopropylmaleate. The protein is 3-isopropylmalate dehydratase large subunit of Mycolicibacterium vanbaalenii (strain DSM 7251 / JCM 13017 / BCRC 16820 / KCTC 9966 / NRRL B-24157 / PYR-1) (Mycobacterium vanbaalenii).